Here is a 195-residue protein sequence, read N- to C-terminus: SPI-2 type 3 secretion system translocon protein SctB (195 aa).

Positions 44 to 80 form a coiled coil; that stretch reads KLMELAKKLRDIMRSYNVEKQRLAWELQVNVLQTQMK. 3 consecutive transmembrane segments (helical) span residues 90-110, 115-135, and 170-190; these read MITAGGAMLSGVLTIGLGAVG, LIAGQAVGHTAGGVMGLGAGV, and EIMQQIIGVGSSLVTVLAEIL.

Belongs to the SctB/EspB family. The core secretion machinery of the T3SS is composed of approximately 20 different proteins, including cytoplasmic components, a base, an export apparatus and a needle. This subunit is involved in the formation of a pore, called the translocon, in host membrane. May form a complex with SseB and SseC/SctE2. SseB is required for correct localization of SseD/SctB2 on the bacterial cell surface. Binds to the chaperone SseA.

The protein localises to the secreted. It is found in the cell surface. The protein resides in the host membrane. Functionally, component of the type III secretion system 2 (SPI-2 T3SS), also called injectisome, which is used to inject bacterial effector proteins into eukaryotic host cells. SseC/SctE2 and SseD/SctB2 are inserted into the host membrane where they form a pore and allow the translocation of effector proteins into the cytosol of target cells. In terms of biological role, required for the translocation of SPI-2 effector proteins. Required for systemic Salmonella infection of the mouse. Essential for SpvB-induced actin depolymerization in the host cell cytoplasm. The sequence is that of SPI-2 type 3 secretion system translocon protein SctB from Salmonella typhimurium (strain LT2 / SGSC1412 / ATCC 700720).